A 414-amino-acid chain; its full sequence is 2,3-diketo-5-methylthiopentyl-1-phosphate enolase (414 aa).

Lys-99 serves as the catalytic Proton acceptor. Residues Lys-148, 174-177 (KDDE), His-265, Gly-338, and 360-361 (GG) contribute to the substrate site. The Mg(2+) site is built by Lys-174, Asp-176, and Glu-177. Lys-174 bears the N6-carboxylysine mark.

This sequence belongs to the RuBisCO large chain family. Type IV subfamily. Homodimer. Mg(2+) is required as a cofactor.

It catalyses the reaction 5-methylsulfanyl-2,3-dioxopentyl phosphate = 2-hydroxy-5-methylsulfanyl-3-oxopent-1-enyl phosphate. Its pathway is amino-acid biosynthesis; L-methionine biosynthesis via salvage pathway; L-methionine from S-methyl-5-thio-alpha-D-ribose 1-phosphate: step 3/6. In terms of biological role, catalyzes the enolization of 2,3-diketo-5-methylthiopentyl-1-phosphate (DK-MTP-1-P) into 2-hydroxy-3-keto-5-methylthiopentenyl-1-phosphate (HK-MTPenyl-1-P). This is 2,3-diketo-5-methylthiopentyl-1-phosphate enolase from Bacillus cereus (strain AH187).